A 701-amino-acid polypeptide reads, in one-letter code: Elongation factor G (701 aa).

The 279-residue stretch at 8–286 (ERIRNIGIIA…AVVYYLPSPV (279 aa)) folds into the tr-type G domain. GTP is bound by residues 17–24 (AHIDAGKT), 85–89 (DTPGH), and 139–142 (NKMD).

It belongs to the TRAFAC class translation factor GTPase superfamily. Classic translation factor GTPase family. EF-G/EF-2 subfamily.

The protein resides in the cytoplasm. Functionally, catalyzes the GTP-dependent ribosomal translocation step during translation elongation. During this step, the ribosome changes from the pre-translocational (PRE) to the post-translocational (POST) state as the newly formed A-site-bound peptidyl-tRNA and P-site-bound deacylated tRNA move to the P and E sites, respectively. Catalyzes the coordinated movement of the two tRNA molecules, the mRNA and conformational changes in the ribosome. This is Elongation factor G from Roseiflexus castenholzii (strain DSM 13941 / HLO8).